The following is a 473-amino-acid chain: Uronate isomerase (473 aa).

This sequence belongs to the metallo-dependent hydrolases superfamily. Uronate isomerase family.

The enzyme catalyses D-glucuronate = D-fructuronate. The catalysed reaction is aldehydo-D-galacturonate = keto-D-tagaturonate. It functions in the pathway carbohydrate metabolism; pentose and glucuronate interconversion. The chain is Uronate isomerase from Bacillus licheniformis (strain ATCC 14580 / DSM 13 / JCM 2505 / CCUG 7422 / NBRC 12200 / NCIMB 9375 / NCTC 10341 / NRRL NRS-1264 / Gibson 46).